The chain runs to 227 residues: Agamous-like MADS-box protein AGL8 homolog (227 aa).

The MADS-box domain maps to 3–57; the sequence is RGRVQLKRIENKINRQVTFSKRRSGLLKKAHEISVLCDAEVGLIVFSTKGKLFEY. Residues 88–178 form the K-box domain; sequence PVSWTLEHRK…SKKVKEREKS (91 aa).

Flower specific.

It is found in the nucleus. In terms of biological role, probable transcription factor. In Solanum lycopersicum (Tomato), this protein is Agamous-like MADS-box protein AGL8 homolog (TDR4).